The primary structure comprises 336 residues: Protein-glutamate methylesterase/protein-glutamine glutaminase 2 (336 aa).

The 118-residue stretch at 2–119 (KIAIVNDMPM…PNPKEAAAPL (118 aa)) folds into the Response regulatory domain. At D53 the chain carries 4-aspartylphosphate. The CheB-type methylesterase domain occupies 147 to 336 (PSRRDRLVAI…APRLIEVFTQ (190 aa)). Active-site residues include S159, H186, and D279.

This sequence belongs to the CheB family. Phosphorylated by CheA. Phosphorylation of the N-terminal regulatory domain activates the methylesterase activity.

The protein resides in the cytoplasm. It carries out the reaction [protein]-L-glutamate 5-O-methyl ester + H2O = L-glutamyl-[protein] + methanol + H(+). It catalyses the reaction L-glutaminyl-[protein] + H2O = L-glutamyl-[protein] + NH4(+). In terms of biological role, involved in chemotaxis. Part of a chemotaxis signal transduction system that modulates chemotaxis in response to various stimuli. Catalyzes the demethylation of specific methylglutamate residues introduced into the chemoreceptors (methyl-accepting chemotaxis proteins or MCP) by CheR. Also mediates the irreversible deamidation of specific glutamine residues to glutamic acid. The sequence is that of Protein-glutamate methylesterase/protein-glutamine glutaminase 2 from Pseudomonas syringae pv. syringae (strain B728a).